The sequence spans 130 residues: Small ribosomal subunit protein uS9 (130 aa).

The interval 109 to 130 is disordered; it reads RKKERKKYGQPGARAKFQYSKR.

The protein belongs to the universal ribosomal protein uS9 family.

The protein is Small ribosomal subunit protein uS9 of Maridesulfovibrio salexigens (strain ATCC 14822 / DSM 2638 / NCIMB 8403 / VKM B-1763) (Desulfovibrio salexigens).